An 894-amino-acid polypeptide reads, in one-letter code: Phosphinomethylmalate isomerase (894 aa).

[4Fe-4S] cluster-binding residues include C438, C504, and C507.

It belongs to the aconitase/IPM isomerase family. [4Fe-4S] cluster serves as cofactor.

It carries out the reaction phosphinomethylmalate = phosphinomethylisomalate. It catalyses the reaction phosphinomethylmalate = 2-(phosphinatomethylidene)butanedioate + H2O. The enzyme catalyses 2-(phosphinatomethylidene)butanedioate + H2O = phosphinomethylisomalate. Its pathway is secondary metabolite biosynthesis; bialaphos biosynthesis. Its function is as follows. Isomerase involved in the biosynthesis of phosphinothricin tripeptide (PTT), also known as bialaphos (BA), a natural-product antibiotic and potent herbicide. Probably catalyzes the isomerization of phosphinomethylmalate to phosphinomethylisomalate. Shows no standard aconitase activity with citrate as a substrate and is not able to complement an acnA mutant. The protein is Phosphinomethylmalate isomerase of Streptomyces viridochromogenes (strain DSM 40736 / JCM 4977 / BCRC 1201 / Tue 494).